Consider the following 865-residue polypeptide: Leucine--tRNA ligase (865 aa).

Positions 41-51 (PYPSGRIHMGH) match the 'HIGH' region motif. Positions 614 to 618 (KMSKS) match the 'KMSKS' region motif. An ATP-binding site is contributed by Lys617.

The protein belongs to the class-I aminoacyl-tRNA synthetase family.

It is found in the cytoplasm. It catalyses the reaction tRNA(Leu) + L-leucine + ATP = L-leucyl-tRNA(Leu) + AMP + diphosphate. This chain is Leucine--tRNA ligase, found in Rhodospirillum centenum (strain ATCC 51521 / SW).